The sequence spans 179 residues: Large ribosomal subunit protein uL5 (179 aa).

Belongs to the universal ribosomal protein uL5 family. Part of the 50S ribosomal subunit; part of the 5S rRNA/L5/L18/L25 subcomplex. Contacts the 5S rRNA and the P site tRNA. Forms a bridge to the 30S subunit in the 70S ribosome.

Functionally, this is one of the proteins that bind and probably mediate the attachment of the 5S RNA into the large ribosomal subunit, where it forms part of the central protuberance. In the 70S ribosome it contacts protein S13 of the 30S subunit (bridge B1b), connecting the 2 subunits; this bridge is implicated in subunit movement. Contacts the P site tRNA; the 5S rRNA and some of its associated proteins might help stabilize positioning of ribosome-bound tRNAs. This Dictyoglomus thermophilum (strain ATCC 35947 / DSM 3960 / H-6-12) protein is Large ribosomal subunit protein uL5.